The following is a 284-amino-acid chain: tRNA pseudouridine synthase A (284 aa).

D62 serves as the catalytic Nucleophile. Y120 contributes to the substrate binding site.

The protein belongs to the tRNA pseudouridine synthase TruA family. As to quaternary structure, homodimer.

It catalyses the reaction uridine(38/39/40) in tRNA = pseudouridine(38/39/40) in tRNA. Functionally, formation of pseudouridine at positions 38, 39 and 40 in the anticodon stem and loop of transfer RNAs. In Thermosynechococcus vestitus (strain NIES-2133 / IAM M-273 / BP-1), this protein is tRNA pseudouridine synthase A.